A 448-amino-acid polypeptide reads, in one-letter code: Exodeoxyribonuclease 7 large subunit (448 aa).

The protein belongs to the XseA family. As to quaternary structure, heterooligomer composed of large and small subunits.

The protein localises to the cytoplasm. It carries out the reaction Exonucleolytic cleavage in either 5'- to 3'- or 3'- to 5'-direction to yield nucleoside 5'-phosphates.. In terms of biological role, bidirectionally degrades single-stranded DNA into large acid-insoluble oligonucleotides, which are then degraded further into small acid-soluble oligonucleotides. The chain is Exodeoxyribonuclease 7 large subunit from Bacillus pumilus (strain SAFR-032).